A 142-amino-acid polypeptide reads, in one-letter code: Hemoglobin subunit alpha-A (142 aa).

In terms of domain architecture, Globin spans 2-142 (VLSAADKNNV…VGTVLTAKYR (141 aa)). His59 contacts O2. A heme b-binding site is contributed by His88.

The protein belongs to the globin family. In terms of assembly, heterotetramer of two alpha chains and two beta chains. In terms of tissue distribution, red blood cells.

Functionally, involved in oxygen transport from the lung to the various peripheral tissues. In Meleagris gallopavo (Wild turkey), this protein is Hemoglobin subunit alpha-A (HBAA).